The following is a 298-amino-acid chain: Elongation factor Ts (298 aa).

Residues T79–V82 are involved in Mg(2+) ion dislocation from EF-Tu.

Belongs to the EF-Ts family.

The protein localises to the cytoplasm. Associates with the EF-Tu.GDP complex and induces the exchange of GDP to GTP. It remains bound to the aminoacyl-tRNA.EF-Tu.GTP complex up to the GTP hydrolysis stage on the ribosome. The protein is Elongation factor Ts (tsf) of Mycoplasma pneumoniae (strain ATCC 29342 / M129 / Subtype 1) (Mycoplasmoides pneumoniae).